The sequence spans 279 residues: Large ribosomal subunit protein uL2 (279 aa).

2 disordered regions span residues Ser32–His58 and Gly223–Gly279. 2 stretches are compositionally biased toward basic residues: residues Lys40 to His58 and Val269 to Gly279.

This sequence belongs to the universal ribosomal protein uL2 family. In terms of assembly, part of the 50S ribosomal subunit. Forms a bridge to the 30S subunit in the 70S ribosome.

Functionally, one of the primary rRNA binding proteins. Required for association of the 30S and 50S subunits to form the 70S ribosome, for tRNA binding and peptide bond formation. It has been suggested to have peptidyltransferase activity; this is somewhat controversial. Makes several contacts with the 16S rRNA in the 70S ribosome. The protein is Large ribosomal subunit protein uL2 of Salinispora tropica (strain ATCC BAA-916 / DSM 44818 / JCM 13857 / NBRC 105044 / CNB-440).